A 281-amino-acid chain; its full sequence is NAD kinase (281 aa).

Catalysis depends on D66, which acts as the Proton acceptor. NAD(+) contacts are provided by residues 66 to 67, 137 to 138, R148, R165, D167, and 178 to 183; these read DG, ND, and TAYSMS.

Belongs to the NAD kinase family. A divalent metal cation serves as cofactor.

The protein resides in the cytoplasm. It catalyses the reaction NAD(+) + ATP = ADP + NADP(+) + H(+). In terms of biological role, involved in the regulation of the intracellular balance of NAD and NADP, and is a key enzyme in the biosynthesis of NADP. Catalyzes specifically the phosphorylation on 2'-hydroxyl of the adenosine moiety of NAD to yield NADP. The polypeptide is NAD kinase (Chlorobium phaeovibrioides (strain DSM 265 / 1930) (Prosthecochloris vibrioformis (strain DSM 265))).